The chain runs to 25 residues: Xenoposin precursor fragment BM2 (25 aa).

In terms of tissue distribution, expressed by the skin glands.

It is found in the secreted. In terms of biological role, antimicrobial peptide. In Xenopus boumbaensis (Mawa clawed frog), this protein is Xenoposin precursor fragment BM2.